A 259-amino-acid chain; its full sequence is Phosphate import ATP-binding protein PstB (259 aa).

The ABC transporter domain maps to Ala11 to Ile254. Gly43–Ser50 is an ATP binding site.

Belongs to the ABC transporter superfamily. Phosphate importer (TC 3.A.1.7) family. In terms of assembly, the complex is composed of two ATP-binding proteins (PstB), two transmembrane proteins (PstC and PstA) and a solute-binding protein (PstS).

It localises to the cell inner membrane. It carries out the reaction phosphate(out) + ATP + H2O = ADP + 2 phosphate(in) + H(+). In terms of biological role, part of the ABC transporter complex PstSACB involved in phosphate import. Responsible for energy coupling to the transport system. The sequence is that of Phosphate import ATP-binding protein PstB from Dechloromonas aromatica (strain RCB).